A 1077-amino-acid polypeptide reads, in one-letter code: ATP-dependent helicase/deoxyribonuclease subunit B (1077 aa).

Belongs to the helicase family. AddB/RexB type 2 subfamily. In terms of assembly, heterodimer of AddA and RexB. It depends on Mg(2+) as a cofactor.

In terms of biological role, the heterodimer acts as both an ATP-dependent DNA helicase and an ATP-dependent, dual-direction single-stranded exonuclease. Recognizes the chi site generating a DNA molecule suitable for the initiation of homologous recombination. This subunit has 5' -&gt; 3' nuclease activity but not helicase activity. The chain is ATP-dependent helicase/deoxyribonuclease subunit B from Streptococcus agalactiae serotype Ia (strain ATCC 27591 / A909 / CDC SS700).